A 406-amino-acid chain; its full sequence is Cysteine desulfurase (406 aa).

The residue at position 226 (K226) is an N6-(pyridoxal phosphate)lysine. Catalysis depends on C364, which acts as the Cysteine persulfide intermediate.

This sequence belongs to the class-V pyridoxal-phosphate-dependent aminotransferase family. Csd subfamily. In terms of assembly, homodimer. Interacts with SufE and the SufBCD complex composed of SufB, SufC and SufD. The interaction with SufE is required to mediate the direct transfer of the sulfur atom from the S-sulfanylcysteine. Pyridoxal 5'-phosphate is required as a cofactor.

The protein localises to the cytoplasm. The catalysed reaction is (sulfur carrier)-H + L-cysteine = (sulfur carrier)-SH + L-alanine. It carries out the reaction L-selenocysteine + AH2 = hydrogenselenide + L-alanine + A + H(+). It participates in cofactor biosynthesis; iron-sulfur cluster biosynthesis. In terms of biological role, cysteine desulfurases mobilize the sulfur from L-cysteine to yield L-alanine, an essential step in sulfur metabolism for biosynthesis of a variety of sulfur-containing biomolecules. Component of the suf operon, which is activated and required under specific conditions such as oxidative stress and iron limitation. Acts as a potent selenocysteine lyase in vitro, that mobilizes selenium from L-selenocysteine. Selenocysteine lyase activity is however unsure in vivo. The sequence is that of Cysteine desulfurase from Cronobacter sakazakii (strain ATCC BAA-894) (Enterobacter sakazakii).